The following is a 459-amino-acid chain: Vasoactive intestinal polypeptide receptor 1 (459 aa).

An N-terminal signal peptide occupies residues 1–30 (MRPPSPPHVRWLCVLAGALACALRPAGSQA). Over 31–142 (ASPQHECEYL…EQQQTKFYNT (112 aa)) the chain is Extracellular. 5 disulfide bridges follow: Cys-37–Cys-209, Cys-50–Cys-72, Cys-63–Cys-105, Cys-86–Cys-122, and Cys-216–Cys-286. Asn-58, Asn-69, and Asn-100 each carry an N-linked (GlcNAc...) asparagine glycan. Residues 143 to 167 (VKTGYTIGYSLSLASLLVAMAILSL) form a helical membrane-spanning segment. Residues 168-175 (FRKLHCTR) lie on the Cytoplasmic side of the membrane. The helical transmembrane segment at 176-197 (NYIHMHLFMSFILRATAVFIKD) threads the bilayer. Residues 198–217 (MALFNSGEIDHCSEASVGCK) lie on the Extracellular side of the membrane. The helical transmembrane segment at 218–242 (AAVVFFQYCVMANFFWLLVEGLYLY) threads the bilayer. The Cytoplasmic portion of the chain corresponds to 243-255 (TLLAVSFFSERKY). The helical transmembrane segment at 256-277 (FWGYILIGWGVPSVFITIWTVV) threads the bilayer. Topologically, residues 278–293 (RIYFEDFGCWDTIINS) are extracellular. Asn-292 is a glycosylation site (N-linked (GlcNAc...) asparagine). A helical transmembrane segment spans residues 294–318 (SLWWIIKAPILLSILVNFVLFICII). Over 319-340 (RILVQKLRPPDIGKNDSSPYSR) the chain is Cytoplasmic. Residues 341–361 (LAKSTLLLIPLFGIHYVMFAF) form a helical membrane-spanning segment. The Extracellular segment spans residues 362-369 (FPDNFKAQ). The chain crosses the membrane as a helical span at residues 370–393 (VKMVFELVVGSFQGFVVAILYCFL). Residues 394-459 (NGEVQAELRR…SSFQAEVSLV (66 aa)) lie on the Cytoplasmic side of the membrane.

It belongs to the G-protein coupled receptor 2 family. As to quaternary structure, interacts with ADCYAP1/PACAP; activated by both PACAP27 and PACAP38 neuropeptides. Interacts with VIP; the interaction results in VIPR1 activation. In liver, lung, intestines, thymus and brain (mostly in the cerebral cortex and hippocampus).

The protein resides in the cell membrane. G protein-coupled receptor activated by the neuropeptides vasoactive intestinal peptide (VIP) and pituitary adenylate cyclase-activating polypeptide (ADCYAP1/PACAP). Binds VIP and both PACAP27 and PACAP38 bioactive peptides with the following order of ligand affinity VIP = PACAP27 &gt; PACAP38. Ligand binding causes a conformation change that triggers signaling via guanine nucleotide-binding proteins (G proteins) and modulates the activity of downstream effectors. Activates cAMP-dependent pathway. The protein is Vasoactive intestinal polypeptide receptor 1 of Rattus norvegicus (Rat).